The primary structure comprises 380 residues: Queuine tRNA-ribosyltransferase (380 aa).

Aspartate 96 serves as the catalytic Proton acceptor. Substrate contacts are provided by residues 96–100 (DSGGF), aspartate 150, glutamine 193, and glycine 220. The segment at 251–257 (GVGAPDS) is RNA binding. Residue aspartate 270 is the Nucleophile of the active site. Residues 275 to 279 (TRIAR) are RNA binding; important for wobble base 34 recognition. Zn(2+) contacts are provided by cysteine 308, cysteine 310, cysteine 313, and histidine 339.

It belongs to the queuine tRNA-ribosyltransferase family. Homodimer. Within each dimer, one monomer is responsible for RNA recognition and catalysis, while the other monomer binds to the replacement base PreQ1. Zn(2+) is required as a cofactor.

It catalyses the reaction 7-aminomethyl-7-carbaguanine + guanosine(34) in tRNA = 7-aminomethyl-7-carbaguanosine(34) in tRNA + guanine. The protein operates within tRNA modification; tRNA-queuosine biosynthesis. Its function is as follows. Catalyzes the base-exchange of a guanine (G) residue with the queuine precursor 7-aminomethyl-7-deazaguanine (PreQ1) at position 34 (anticodon wobble position) in tRNAs with GU(N) anticodons (tRNA-Asp, -Asn, -His and -Tyr). Catalysis occurs through a double-displacement mechanism. The nucleophile active site attacks the C1' of nucleotide 34 to detach the guanine base from the RNA, forming a covalent enzyme-RNA intermediate. The proton acceptor active site deprotonates the incoming PreQ1, allowing a nucleophilic attack on the C1' of the ribose to form the product. After dissociation, two additional enzymatic reactions on the tRNA convert PreQ1 to queuine (Q), resulting in the hypermodified nucleoside queuosine (7-(((4,5-cis-dihydroxy-2-cyclopenten-1-yl)amino)methyl)-7-deazaguanosine). This chain is Queuine tRNA-ribosyltransferase, found in Streptococcus pneumoniae (strain ATCC BAA-255 / R6).